The primary structure comprises 150 residues: FAD synthase (150 aa).

ATP-binding positions include 20 to 21 (TF), 25 to 28 (HPGH), and Asp103.

This sequence belongs to the archaeal FAD synthase family. Homodimer. The cofactor is a divalent metal cation.

The enzyme catalyses FMN + ATP + H(+) = FAD + diphosphate. It participates in cofactor biosynthesis; FAD biosynthesis; FAD from FMN: step 1/1. Its function is as follows. Catalyzes the transfer of the AMP portion of ATP to flavin mononucleotide (FMN) to produce flavin adenine dinucleotide (FAD) coenzyme. The sequence is that of FAD synthase from Methanohalobium evestigatum (strain ATCC BAA-1072 / DSM 3721 / NBRC 107634 / OCM 161 / Z-7303).